Here is a 36-residue protein sequence, read N- to C-terminus: Amanexitide proprotein 1 (36 aa).

The propeptide occupies 1 to 10 (MSDINTARLP). Residues 11 to 19 (VFSLPVFFP) constitute a cross-link (cyclopeptide (Val-Pro)). A propeptide spanning residues 20–36 (FVSDDIQAVLTRGESLC) is cleaved from the precursor.

This sequence belongs to the MSDIN fungal toxin family. Post-translationally, processed by the macrocyclase-peptidase enzyme POPB to yield a toxic cyclic nonapeptide. POPB first removes 10 residues from the N-terminus. Conformational trapping of the remaining peptide forces the enzyme to release this intermediate rather than proceed to macrocyclization. The enzyme rebinds the remaining peptide in a different conformation and catalyzes macrocyclization of the N-terminal 9 residues. Expressed in basidiocarps.

Functionally, cyclic nonapeptide that belongs to the MSDIN-like toxin family responsible for a large number of food poisoning cases and deaths. The protein is Amanexitide proprotein 1 of Amanita exitialis (Guangzhou destroying angel).